Reading from the N-terminus, the 365-residue chain is P43 5S RNA-binding protein (365 aa).

C2H2-type zinc fingers lie at residues 15–39 (LRCPAAGCKAFYRKEGKLQDHMAGH), 45–69 (WKCGIKDCDKVFARKRQILKHVKRH), 75–100 (LSCPTAGCKMTFSTKKSLSRHKLYKH), 106–130 (LKCFVPGCKRSFRKKRALRRHLSVH), 136–160 (SVCDVPGCSWKSSSVAKLVAHQKRH), 163–187 (YRCSYEGCQTVSPTWTALQTHVKKH), 191–213 (LQCAACKKPFKKASALRRHKATH), 220–245 (LPCPRQDCDKTFSSVFNLTHHVRKLH), and 251–275 (HRCPHSGCTRSFAMRESLLRHLVVH).

As to quaternary structure, the 42S RNP particle comprises four subunits each of which contains one molecule of 5S RNA, three molecules of tRNA, two molecules of p50 (EF1-alpha) and one molecule of the 5S RNA binding protein 43.

Its function is as follows. p43 is a 5S RNA binding protein which is a major constituent of oocytes and comprises part of a 42S ribonucleoprotein storage particle. The protein is P43 5S RNA-binding protein of Xenopus laevis (African clawed frog).